Consider the following 142-residue polypeptide: Large ribosomal subunit protein bL17 (142 aa).

The protein belongs to the bacterial ribosomal protein bL17 family. As to quaternary structure, part of the 50S ribosomal subunit. Contacts protein L32.

This is Large ribosomal subunit protein bL17 from Chlamydia felis (strain Fe/C-56) (Chlamydophila felis).